Reading from the N-terminus, the 782-residue chain is E3 ubiquitin-protein ligase SopA (782 aa).

The Glycyl thioester intermediate role is filled by cysteine 753.

The protein belongs to the SopA E3 ligase family. In terms of processing, ubiquitinated in the presence of host E1 ubiquitin-activating enzyme, E2 ubiquitin-conjugating enzyme and ubiquitin.

The protein localises to the secreted. The protein resides in the host cell. The catalysed reaction is S-ubiquitinyl-[E2 ubiquitin-conjugating enzyme]-L-cysteine + [acceptor protein]-L-lysine = [E2 ubiquitin-conjugating enzyme]-L-cysteine + N(6)-ubiquitinyl-[acceptor protein]-L-lysine.. In terms of biological role, effector proteins function to alter host cell physiology and promote bacterial survival in host tissues. This protein is an E3 ubiquitin ligase that interferes with host's ubiquitination pathway. The protein is E3 ubiquitin-protein ligase SopA (sopA) of Salmonella choleraesuis (strain SC-B67).